The chain runs to 417 residues: Serine hydroxymethyltransferase (417 aa).

Residues Leu-121 and 125-127 (GHL) contribute to the (6S)-5,6,7,8-tetrahydrofolate site. Lys-230 is modified (N6-(pyridoxal phosphate)lysine). Position 245 (Glu-245) interacts with (6S)-5,6,7,8-tetrahydrofolate.

Belongs to the SHMT family. Homodimer. Pyridoxal 5'-phosphate is required as a cofactor.

It is found in the cytoplasm. It catalyses the reaction (6R)-5,10-methylene-5,6,7,8-tetrahydrofolate + glycine + H2O = (6S)-5,6,7,8-tetrahydrofolate + L-serine. The protein operates within one-carbon metabolism; tetrahydrofolate interconversion. It participates in amino-acid biosynthesis; glycine biosynthesis; glycine from L-serine: step 1/1. Functionally, catalyzes the reversible interconversion of serine and glycine with tetrahydrofolate (THF) serving as the one-carbon carrier. This reaction serves as the major source of one-carbon groups required for the biosynthesis of purines, thymidylate, methionine, and other important biomolecules. Also exhibits THF-independent aldolase activity toward beta-hydroxyamino acids, producing glycine and aldehydes, via a retro-aldol mechanism. The sequence is that of Serine hydroxymethyltransferase from Desulfitobacterium hafniense (strain DSM 10664 / DCB-2).